A 59-amino-acid polypeptide reads, in one-letter code: Conotoxin Ts-03 (59 aa).

An N-terminal signal peptide occupies residues 1 to 19; it reads MRCLPVFIILLLLIPSAAS. The propeptide occupies 20–47; sequence VAQPKTKDDVALASFYDNAKRTLQRHWA.

The protein belongs to the conotoxin T superfamily. Contains 2 disulfide bonds that can be either 'C1-C3, C2-C4' or 'C1-C4, C2-C3', since these disulfide connectivities have been observed for conotoxins with cysteine framework V (for examples, see AC P0DQQ7 and AC P81755). Expressed by the venom duct.

It is found in the secreted. The chain is Conotoxin Ts-03 from Conus tessulatus (Tessellate cone).